The primary structure comprises 148 residues: MSVEIESIEHELEESIASLRQAGIRITPQRQAILRYLISSHTHPTADEIYQALSPDFPNISVATIYNNLRVFKDIGIVKELTYGDSSSRFDFNTHNHYHIICEQCGKIVDFQYPQLNEIERLAQHMTDFDVTHHRMEIYGVCKECQDK.

The segment at methionine 1–glycine 84 is DNA-binding. The Zn(2+) site is built by cysteine 102, cysteine 105, cysteine 142, and cysteine 145.

This sequence belongs to the Fur family.

It localises to the cytoplasm. Functionally, manganese-dependent repressor that controls a regulon of oxidative stress resistance and iron-storage proteins. May act as a hydrogen peroxide and organic hydroperoxide sensor. The polypeptide is Peroxide-responsive repressor PerR (perR) (Staphylococcus aureus (strain Mu50 / ATCC 700699)).